The primary structure comprises 270 residues: Interleukin-1 alpha (270 aa).

Residues 1 to 114 (MAKVPDLFED…HDLEETIQPR (114 aa)) constitute a propeptide that is removed on maturation. The N-linked (GlcNAc...) asparagine glycan is linked to N64. The residue at position 85 (K85) is an N6-acetyllysine. The segment at 85–89 (KKRRL) is nuclear localization signal (NLS). S90 carries the post-translational modification Phosphoserine. N-linked (GlcNAc...) asparagine glycosylation is found at N139 and N143.

It belongs to the IL-1 family. As to quaternary structure, monomer. Interacts with TMED10; the interaction mediates the translocation from the cytoplasm into the ERGIC (endoplasmic reticulum-Golgi intermediate compartment) and thereby secretion. Interacts with IL1R1. Interacts with S100A13; this interaction is the first step in the export of IL1A, followed by direct translocation of this complex across the plasma membrane. In terms of processing, acetylated within its nuclear localization sequence, which impacts subcellular localization. Proteolytic processed by CAPN1 in a calcium-dependent manner. Cleavage from 31 kDa precursor to 18 kDa biologically active molecules. Post-translationally, phosphorylated. Phosphorylation greatly enhances susceptibility to digestion and promotes the conversion of pre-IL1A alpha to the biologically active IL1A.

Its subcellular location is the nucleus. The protein resides in the cytoplasm. It is found in the secreted. Its function is as follows. Cytokine constitutively present intracellularly in nearly all resting non-hematopoietic cells that plays an important role in inflammation and bridges the innate and adaptive immune systems. After binding to its receptor IL1R1 together with its accessory protein IL1RAP, forms the high affinity interleukin-1 receptor complex. Signaling involves the recruitment of adapter molecules such as MYD88, IRAK1 or IRAK4. In turn, mediates the activation of NF-kappa-B and the three MAPK pathways p38, p42/p44 and JNK pathways. Within the cell, acts as an alarmin and cell death results in its liberation in the extracellular space after disruption of the cell membrane to induce inflammation and alert the host to injury or damage. In addition to its role as a danger signal, which occurs when the cytokine is passively released by cell necrosis, directly senses DNA damage and acts as a signal for genotoxic stress without loss of cell integrity. The chain is Interleukin-1 alpha from Mus musculus (Mouse).